Here is a 152-residue protein sequence, read N- to C-terminus: Natriuretic peptides A (152 aa).

Positions 1 to 24 (MGSFSITKGFFLFLAFWLPGHIGA) are cleaved as a signal peptide. 2 consecutive propeptides follow at residues 25–122 (NPVY…AGPR) and 92–102 (DGGALGRGPWD). The segment at 54–104 (DEVMPPQALSEQTDEAGAALSSLSEVPPWTGEVNPSQRDGGALGRGPWDPS) is disordered. The residue at position 128 (S128) is a Phosphoserine. C129 and C145 are oxidised to a cystine. Positions 146–150 (NSFRY) are important for degradation of atrial natriuretic peptide by IDE.

It belongs to the natriuretic peptide family. As to quaternary structure, homodimer; disulfide-linked antiparallel dimer. In terms of processing, the precursor molecule is proteolytically cleaved by CORIN at Arg-122 to produce the atrial natriuretic peptide. Undergoes further proteolytic cleavage by unknown proteases to give rise to long-acting natriuretic peptide, vessel dilator and kaliuretic peptide. Additional processing gives rise to the auriculin and atriopeptin peptides. In the kidneys, alternative processing by an unknown protease results in the peptide urodilatin. Post-translationally, cleavage by MME initiates degradation of the factor and thereby regulates its activity. Degradation by IDE results in reduced activation of NPR1 (in vitro). During IDE degradation, the resulting products can temporarily stimulate NPR2 to produce cGMP, before the fragments are completely degraded and inactivated by IDE (in vitro). Degraded by IDE. In terms of processing, phosphorylation on Ser-128 decreases vasorelaxant activity. High levels of expression in the atria compared to the ventricles. Very low levels of expression detected in extracardiac tissues such as the brain, hypothalamus, pituitary, lung and aorta. As to expression, atria (at protein level). In terms of tissue distribution, high levels of expression in the atria with very low levels of expression in the ventricles (at protein level). Relatively low levels of expression detected in the brain compared to the atria (at protein level).

The protein resides in the secreted. It localises to the perikaryon. It is found in the cell projection. Hormone that plays a key role in mediating cardio-renal homeostasis, and is involved in vascular remodeling and regulating energy metabolism. Acts by specifically binding and stimulating NPR1 to produce cGMP, which in turn activates effector proteins, such as PRKG1, that drive various biological responses. Regulates vasodilation, natriuresis, diuresis and aldosterone synthesis and is therefore essential for regulating blood pressure, controlling the extracellular fluid volume and maintaining the fluid-electrolyte balance. Also involved in inhibiting cardiac remodeling and cardiac hypertrophy by inducing cardiomyocyte apoptosis and attenuating the growth of cardiomyocytes and fibroblasts. Plays a role in female pregnancy by promoting trophoblast invasion and spiral artery remodeling in uterus, and thus prevents pregnancy-induced hypertension. In adipose tissue, acts in various cGMP- and PKG-dependent pathways to regulate lipid metabolism and energy homeostasis. This includes up-regulating lipid metabolism and mitochondrial oxygen utilization by activating the AMP-activated protein kinase (AMPK), and increasing energy expenditure by acting via MAPK11 to promote the UCP1-dependent thermogenesis of brown adipose tissue. Binds the clearance receptor NPR3 which removes the hormone from circulation. Its function is as follows. May have a role in cardio-renal homeostasis through regulation of natriuresis, diuresis, vasodilation, and inhibiting aldosterone synthesis. In vitro, promotes the production of cGMP and induces vasodilation. May promote natriuresis, at least in part, by enhancing prostaglandin E2 synthesis resulting in the inhibition of renal Na+-K+-ATPase. However reports on the involvement of this peptide in mammal blood volume and blood pressure homeostasis are conflicting; according to a report, in vivo it is not sufficient to activate cGMP and does not inhibit collecting duct transport nor effect diuresis and natriuresis. Appears to bind to specific receptors that are distinct from the receptors bound by atrial natriuretic peptide and vessel dilator. Possibly enhances protein excretion in urine by decreasing proximal tubular protein reabsorption. Functionally, may have a role in cardio-renal homeostasis through regulation of natriuresis, diuresis, and vasodilation. In vitro, promotes the production of cGMP and induces vasodilation. May promote natriuresis, at least in part, by enhancing prostaglandin E2 synthesis resulting in the inhibition of renal Na+-K+-ATPase. However reports on the involvement of this peptide in mammal blood volume and blood pressure homeostasis are conflicting; according to a report, in vivo it is not sufficient to activate cGMP and does not inhibit collecting duct transport nor effect diuresis and natriuresis. Appears to bind to specific receptors that are distinct from the receptors bound by the atrial natriuretic and long-acting natriuretic peptides. Possibly functions in protein excretion in urine by maintaining the integrity of the proximal tubules and enhancing protein excretion by decreasing proximal tubular protein reabsorption. In terms of biological role, may have a role in cardio-renal homeostasis through regulation of diuresis and inhibiting aldosterone synthesis. In vitro, promotes the production of cGMP and induces vasodilation. May promote natriuresis, at least in part, by enhancing prostaglandin E2 synthesis resulting in the inhibition of renal Na+-K+-ATPase. May have a role in potassium excretion but not sodium excretion (natriuresis). Possibly enhances protein excretion in urine by decreasing proximal tubular protein reabsorption. Hormone produced in the kidneys that appears to be important for maintaining cardio-renal homeostasis. Mediates vasodilation, natriuresis and diuresis primarily in the renal system, in order to maintain the extracellular fluid volume and control the fluid-electrolyte balance. Specifically binds and stimulates cGMP production by renal transmembrane receptors, likely NPR1. Urodilatin not ANP, may be the natriuretic peptide responsible for the regulation of sodium and water homeostasis in the kidney. Its function is as follows. May have a role in cardio-renal homeostasis through regulation of natriuresis and vasodilation. In vivo promotes natriuresis and in vitro, vasodilates renal artery strips. Functionally, may have a role in cardio-renal homeostasis through regulation of regulation of natriuresis and vasodilation. In vivo promotes natriuresis. In vitro, vasodilates intestinal smooth muscle but not smooth muscle strips. In terms of biological role, may have a role in cardio-renal homeostasis through regulation of natriuresis and vasodilation. In vivo promotes natriuresis. In vitro, selectively vasodilates intestinal and vascular smooth muscle strips. May have a role in cardio-renal homeostasis through regulation of natriuresis and vasodilation. In vivo promotes natriuresis. In vitro, selectively vasodilates intestinal smooth muscle but not vascular smooth muscle strips. The protein is Natriuretic peptides A (Nppa) of Rattus norvegicus (Rat).